Here is a 98-residue protein sequence, read N- to C-terminus: Large ribosomal subunit protein uL23 (98 aa).

Belongs to the universal ribosomal protein uL23 family. As to quaternary structure, part of the 50S ribosomal subunit. Contacts protein L29, and trigger factor when it is bound to the ribosome.

In terms of biological role, one of the early assembly proteins it binds 23S rRNA. One of the proteins that surrounds the polypeptide exit tunnel on the outside of the ribosome. Forms the main docking site for trigger factor binding to the ribosome. The polypeptide is Large ribosomal subunit protein uL23 (Streptococcus sanguinis (strain SK36)).